The following is a 200-amino-acid chain: Putative 3-methyladenine DNA glycosylase (200 aa).

It belongs to the DNA glycosylase MPG family.

The chain is Putative 3-methyladenine DNA glycosylase from Bradyrhizobium diazoefficiens (strain JCM 10833 / BCRC 13528 / IAM 13628 / NBRC 14792 / USDA 110).